Here is a 254-residue protein sequence, read N- to C-terminus: 5-oxoprolinase subunit A (254 aa).

This sequence belongs to the LamB/PxpA family. In terms of assembly, forms a complex composed of PxpA, PxpB and PxpC.

The enzyme catalyses 5-oxo-L-proline + ATP + 2 H2O = L-glutamate + ADP + phosphate + H(+). Its function is as follows. Catalyzes the cleavage of 5-oxoproline to form L-glutamate coupled to the hydrolysis of ATP to ADP and inorganic phosphate. This is 5-oxoprolinase subunit A from Acinetobacter baylyi (strain ATCC 33305 / BD413 / ADP1).